The primary structure comprises 300 residues: 4-hydroxy-tetrahydrodipicolinate synthase (300 aa).

Thr46 contacts pyruvate. The active-site Proton donor/acceptor is the Tyr135. The active-site Schiff-base intermediate with substrate is Lys163. Pyruvate is bound at residue Val205.

The protein belongs to the DapA family. In terms of assembly, homotetramer; dimer of dimers.

The protein resides in the cytoplasm. The enzyme catalyses L-aspartate 4-semialdehyde + pyruvate = (2S,4S)-4-hydroxy-2,3,4,5-tetrahydrodipicolinate + H2O + H(+). It participates in amino-acid biosynthesis; L-lysine biosynthesis via DAP pathway; (S)-tetrahydrodipicolinate from L-aspartate: step 3/4. In terms of biological role, catalyzes the condensation of (S)-aspartate-beta-semialdehyde [(S)-ASA] and pyruvate to 4-hydroxy-tetrahydrodipicolinate (HTPA). The protein is 4-hydroxy-tetrahydrodipicolinate synthase of Koribacter versatilis (strain Ellin345).